The following is a 5628-amino-acid chain: Polyketide synthase ThaG (5628 aa).

Positions 13–448 (HDDIAVIGIA…GTNAHVVLRE (436 aa)) constitute a Ketosynthase family 3 (KS3) 1 domain. Catalysis depends on for beta-ketoacyl synthase 1 activity residues Cys184, His319, and His361. Disordered regions lie at residues 552–613 (GNLV…DGPT) and 1156–1183 (ASPG…RAEA). The segment covering 559-589 (GPHDEQADHDGSGEHGEHGERARAGADDLSR) has biased composition (basic and acidic residues). Residues 1156-1173 (ASPGAASSGAAAPNAASD) are compositionally biased toward low complexity. The span at 1174–1183 (ASRDTERAEA) shows a compositional bias: basic and acidic residues. In terms of domain architecture, Carrier 1 spans 1209–1286 (AHGSARLPAL…RLAGHLATRL (78 aa)). Residue Ser1246 is modified to O-(pantetheine 4'-phosphoryl)serine. The region spanning 1373–1781 (YEPIAIVGMS…GTNAHVIVEA (409 aa)) is the Ketosynthase family 3 (KS3) 2 domain. Catalysis depends on for beta-ketoacyl synthase 2 activity residues Cys1529, His1664, and His1704. Residues 1967-2099 (AREPGARERA…GVVDELNEPA (133 aa)) form an N-terminal hotdog fold 1 region. Residues 1967–2261 (AREPGARERA…SARWRKLAGA (295 aa)) form the PKS/mFAS DH 1 domain. Residue His1999 is the Proton acceptor; for dehydratase activity 1 of the active site. The C-terminal hotdog fold 1 stretch occupies residues 2113–2261 (AGERVDGAAL…SARWRKLAGA (149 aa)). The active-site Proton donor; for dehydratase activity 1 is the Asp2175. The tract at residues 2426–2446 (DADEDDRDGREPAGGPPLRDD) is disordered. Positions 2702–2780 (PAARVDLHAL…AIARALDASA (79 aa)) constitute a Carrier 2 domain. The segment at 2817–2836 (TPPDAGAPQRGAHAAAAEGS) is disordered. Positions 2822-2835 (GAPQRGAHAAAAEG) are enriched in low complexity. Residues 2862-2935 (ARVGARLSAL…ELTDYFVRRH (74 aa)) enclose the Carrier 3 domain. An O-(pantetheine 4'-phosphoryl)serine modification is found at Ser2896. Residues 3005–3430 (ADAIAVIGLA…GANAHVIVRE (426 aa)) form the Ketosynthase family 3 (KS3) 3 domain. Residues Cys3175, His3310, and His3351 each act as for beta-ketoacyl synthase 3 activity in the active site. A disordered region spans residues 3526–3546 (PGKKQLRGNGRARRGDAPPAG). Residues 3621–3743 (HPMLDANRSE…GRSPSRAARG (123 aa)) form an N-terminal hotdog fold 2 region. The PKS/mFAS DH 2 domain occupies 3621-3895 (HPMLDANRSE…SRAAASWRTA (275 aa)). The active-site Proton acceptor; for dehydratase activity 2 is the His3650. Residues 3758 to 3895 (RAAPAFDADA…SRAAASWRTA (138 aa)) form a C-terminal hotdog fold 2 region. The active-site Proton donor; for dehydratase activity 2 is the Asp3818. The disordered stretch occupies residues 3917–3942 (PAAESPSAATSTSAATSPAISTSAAT). One can recognise a Carrier 4 domain in the interval 4840 to 4914 (TRTAALLRSL…ALAAYVGSQL (75 aa)). The residue at position 4874 (Ser4874) is an O-(pantetheine 4'-phosphoryl)serine. Residues 4960-4992 (APRARTGADAPDTSLASSASSISSARASSPASP) form a disordered region. The region spanning 4998 to 5424 (SFDVAIVGAS…GVNAHVVLEE (427 aa)) is the Ketosynthase family 3 (KS3) 4 domain. Residues Cys5158, His5293, and His5339 each act as for beta-ketoacyl synthase 4 activity in the active site. A Carrier 5 domain is found at 5470–5544 (ARIEAVIRDA…ALRDHVAERI (75 aa)). Position 5504 is an O-(pantetheine 4'-phosphoryl)serine (Ser5504). The interval 5573-5603 (VSEATEASDASEASDASEASEASEASEASKA) is disordered.

Pantetheine 4'-phosphate serves as cofactor.

It localises to the cytoplasm. Its pathway is antibiotic biosynthesis. Involved in production of the polyketide antibiotic thailandamide. This Burkholderia thailandensis (strain ATCC 700388 / DSM 13276 / CCUG 48851 / CIP 106301 / E264) protein is Polyketide synthase ThaG.